The sequence spans 207 residues: Twist-related protein 1 (207 aa).

Over residues 1 to 18 the composition is skewed to low complexity; the sequence is MMQDVSSSPVSPADDSLS. Positions 1 to 110 are disordered; it reads MMQDVSSSPV…GGGSPQSYEE (110 aa). The span at 34-43 shows a compositional bias: basic residues; the sequence is RGGRKRRSSR. Gly residues-rich tracts occupy residues 46–65 and 80–104; these read AGGG…GGDE and GCGG…GGGS. One can recognise a bHLH domain in the interval 113–164; that stretch reads TQRVMANVRERQRTQSLNEAFAALRKIIPTLPSDKLSKIQTLKLAARYIDFL. The sufficient for transactivation activity stretch occupies residues 166 to 196; it reads QVLQSDELDSKMASCSYVAHERLSYAFSVWR.

Efficient DNA binding requires dimerization with another bHLH protein. Homodimer or heterodimer with E proteins such as TCF3. ID1 binds preferentially to TCF3 but does not interact efficiently with TWIST1 so ID1 levels control the amount of TCF3 available to dimerize with TWIST and thus determine the type of dimer formed.

It is found in the nucleus. Functionally, acts as a transcriptional regulator. Inhibits myogenesis by sequestrating E proteins, inhibiting trans-activation by MEF2, and inhibiting DNA-binding by MYOD1 through physical interaction. This interaction probably involves the basic domains of both proteins. Also represses expression of pro-inflammatory cytokines such as TNFA and IL1B. Regulates cranial suture patterning and fusion. Activates transcription as a heterodimer with E proteins. Regulates gene expression differentially, depending on dimer composition. Homodimers induce expression of FGFR2 and POSTN while heterodimers repress FGFR2 and POSTN expression and induce THBS1 expression. Heterodimerization is also required for osteoblast differentiation. Represses the activity of the circadian transcriptional activator: NPAS2-BMAL1 heterodimer. This is Twist-related protein 1 (TWIST1) from Cebus capucinus (White-faced sapajou).